Here is a 137-residue protein sequence, read N- to C-terminus: Nucleoside diphosphate kinase (137 aa).

The ATP site is built by lysine 9, phenylalanine 57, arginine 85, threonine 91, arginine 102, and asparagine 112. Histidine 115 serves as the catalytic Pros-phosphohistidine intermediate.

Belongs to the NDK family. As to quaternary structure, homotetramer. It depends on Mg(2+) as a cofactor.

The protein resides in the cytoplasm. It carries out the reaction a 2'-deoxyribonucleoside 5'-diphosphate + ATP = a 2'-deoxyribonucleoside 5'-triphosphate + ADP. It catalyses the reaction a ribonucleoside 5'-diphosphate + ATP = a ribonucleoside 5'-triphosphate + ADP. Major role in the synthesis of nucleoside triphosphates other than ATP. The ATP gamma phosphate is transferred to the NDP beta phosphate via a ping-pong mechanism, using a phosphorylated active-site intermediate. This chain is Nucleoside diphosphate kinase, found in Sulfurovum sp. (strain NBC37-1).